The primary structure comprises 262 residues: Indole-3-glycerol phosphate synthase (262 aa).

Belongs to the TrpC family.

The enzyme catalyses 1-(2-carboxyphenylamino)-1-deoxy-D-ribulose 5-phosphate + H(+) = (1S,2R)-1-C-(indol-3-yl)glycerol 3-phosphate + CO2 + H2O. The protein operates within amino-acid biosynthesis; L-tryptophan biosynthesis; L-tryptophan from chorismate: step 4/5. The sequence is that of Indole-3-glycerol phosphate synthase from Clostridium acetobutylicum (strain ATCC 824 / DSM 792 / JCM 1419 / IAM 19013 / LMG 5710 / NBRC 13948 / NRRL B-527 / VKM B-1787 / 2291 / W).